A 435-amino-acid chain; its full sequence is Citrate synthase (435 aa).

Active-site residues include His311 and Asp370.

The protein belongs to the citrate synthase family.

It carries out the reaction oxaloacetate + acetyl-CoA + H2O = citrate + CoA + H(+). Its pathway is carbohydrate metabolism; tricarboxylic acid cycle; isocitrate from oxaloacetate: step 1/2. The chain is Citrate synthase (gltA) from Rickettsia slovaca (strain 13-B).